The following is a 333-amino-acid chain: Glycerol-3-phosphate dehydrogenase [NAD(P)+] (333 aa).

NADPH is bound by residues tryptophan 12, histidine 31, and lysine 105. Residues lysine 105, glycine 134, and serine 136 each contribute to the sn-glycerol 3-phosphate site. Alanine 138 serves as a coordination point for NADPH. Sn-glycerol 3-phosphate-binding residues include lysine 189, aspartate 242, serine 252, arginine 253, and asparagine 254. The Proton acceptor role is filled by lysine 189. Arginine 253 is a binding site for NADPH. Residues valine 278 and glutamate 280 each coordinate NADPH.

The protein belongs to the NAD-dependent glycerol-3-phosphate dehydrogenase family.

It localises to the cytoplasm. It catalyses the reaction sn-glycerol 3-phosphate + NAD(+) = dihydroxyacetone phosphate + NADH + H(+). The catalysed reaction is sn-glycerol 3-phosphate + NADP(+) = dihydroxyacetone phosphate + NADPH + H(+). Its pathway is membrane lipid metabolism; glycerophospholipid metabolism. Functionally, catalyzes the reduction of the glycolytic intermediate dihydroxyacetone phosphate (DHAP) to sn-glycerol 3-phosphate (G3P), the key precursor for phospholipid synthesis. This chain is Glycerol-3-phosphate dehydrogenase [NAD(P)+], found in Brachyspira hyodysenteriae (strain ATCC 49526 / WA1).